Here is a 453-residue protein sequence, read N- to C-terminus: Carbamoyl phosphate synthase arginine-specific small chain (453 aa).

A mitochondrion-targeting transit peptide spans 1–33 (MFSRLAARLPKASALNGVAARQVRNLSQPAITG). The segment at 26-50 (LSQPAITGSKGRNMPAREPRTTAAA) is disordered. Positions 97, 280, and 282 each coordinate L-glutamine. Residues 233 to 420 (HVALIDCGVK…MENVELFKSN (188 aa)) form the Glutamine amidotransferase type-1 domain. Cys-309 serves as the catalytic Nucleophile. The L-glutamine site is built by Leu-310, Gln-313, Asn-351, Gly-353, and Tyr-354. Residues His-393 and Glu-395 contribute to the active site.

Belongs to the CarA family. In terms of assembly, heterodimer composed of 2 chains; the small (or glutamine) chain promotes the hydrolysis of glutamine to ammonia, which is used by the large (or ammonia) chain to synthesize carbamoyl phosphate.

The protein localises to the mitochondrion matrix. The enzyme catalyses hydrogencarbonate + L-glutamine + 2 ATP + H2O = carbamoyl phosphate + L-glutamate + 2 ADP + phosphate + 2 H(+). It carries out the reaction L-glutamine + H2O = L-glutamate + NH4(+). The protein operates within amino-acid biosynthesis; L-arginine biosynthesis; carbamoyl phosphate from bicarbonate: step 1/1. Small subunit of the arginine-specific carbamoyl phosphate synthase (CPSase). CPSase catalyzes the formation of carbamoyl phosphate from the ammonia moiety of glutamine, carbonate, and phosphate donated by ATP, the first step of the arginine biosynthetic pathway. The small subunit (glutamine amidotransferase) binds and cleaves glutamine to supply the large subunit with the substrate ammonia. This is Carbamoyl phosphate synthase arginine-specific small chain (arg-2) from Neurospora crassa (strain ATCC 24698 / 74-OR23-1A / CBS 708.71 / DSM 1257 / FGSC 987).